The sequence spans 418 residues: Inner capsid protein sigma-2 (418 aa).

The protein belongs to the orthoreovirus sigma-1 protein family. In terms of assembly, interacts with protein mu-NS; in viral inclusions.

It is found in the virion. Its function is as follows. Inner capsid (core) component. The protein is Inner capsid protein sigma-2 (S2) of Reovirus type 3 (strain Dearing) (T3D).